A 404-amino-acid polypeptide reads, in one-letter code: Cysteine desulfurase IscS (404 aa).

Residues 73–74 (AT), Asn-153, Gln-181, and 201–203 (SAH) each bind pyridoxal 5'-phosphate. Lys-204 is modified (N6-(pyridoxal phosphate)lysine). Thr-241 contributes to the pyridoxal 5'-phosphate binding site. Cys-327 acts as the Cysteine persulfide intermediate in catalysis. Cys-327 contacts [2Fe-2S] cluster.

The protein belongs to the class-V pyridoxal-phosphate-dependent aminotransferase family. NifS/IscS subfamily. In terms of assembly, homodimer. Forms a heterotetramer with IscU, interacts with other sulfur acceptors. Pyridoxal 5'-phosphate serves as cofactor.

The protein resides in the cytoplasm. The enzyme catalyses (sulfur carrier)-H + L-cysteine = (sulfur carrier)-SH + L-alanine. It functions in the pathway cofactor biosynthesis; iron-sulfur cluster biosynthesis. Master enzyme that delivers sulfur to a number of partners involved in Fe-S cluster assembly, tRNA modification or cofactor biosynthesis. Catalyzes the removal of elemental sulfur atoms from cysteine to produce alanine. Functions as a sulfur delivery protein for Fe-S cluster synthesis onto IscU, an Fe-S scaffold assembly protein, as well as other S acceptor proteins. The chain is Cysteine desulfurase IscS from Anaeromyxobacter dehalogenans (strain 2CP-C).